We begin with the raw amino-acid sequence, 451 residues long: Protein FAM117A (451 aa).

Residues 1 to 25 show a composition bias toward gly residues; sequence MSGAAAGGRGGGSWGPGRGGAGGLR. 2 disordered regions span residues 1-83 and 164-183; these read MSGA…RPQP and RTKL…VQGD. A phosphoserine mark is found at Ser29 and Ser67. Residues 149 to 175 adopt a coiled-coil conformation; that stretch reads TDHRKEITKLKQQLQRTKLSRSGKEKE. Phosphoserine is present on residues Ser193 and Ser213. The segment at 242-293 is disordered; sequence DGHRAPAPPQNSSCDHSLLLEPGNLTSSPSVPLASPQPPSQASREEHQGATE. Phosphoserine is present on residues Ser318 and Ser326. Thr353 is modified (phosphothreonine). The tract at residues 403–451 is disordered; that stretch reads SPGSPLPTASPRAPRKGPEASKASSLPSEPWQRSPPSEESVLFQSSLVV. Phosphoserine is present on residues Ser412 and Ser426. The segment covering 436 to 451 has biased composition (polar residues); it reads SPPSEESVLFQSSLVV.

This sequence belongs to the FAM117 family.

This is Protein FAM117A (Fam117a) from Mus musculus (Mouse).